Reading from the N-terminus, the 70-residue chain is Cytochrome c oxidase subunit 8B, mitochondrial (70 aa).

Residues Met-1–His-24 constitute a mitochondrion transit peptide. At Ile-25–Ser-35 the chain is on the mitochondrial matrix side. A helical membrane pass occupies residues Pro-36–Tyr-59. At His-60–Ala-70 the chain is on the mitochondrial intermembrane side.

The protein belongs to the cytochrome c oxidase VIII family. Component of the cytochrome c oxidase (complex IV, CIV), a multisubunit enzyme composed of 14 subunits. The complex is composed of a catalytic core of 3 subunits MT-CO1, MT-CO2 and MT-CO3, encoded in the mitochondrial DNA, and 11 supernumerary subunits COX4I1 (or COX4I2), COX5A, COX5B, COX6A2 (or COX6A1), COX6B1 (or COX6B2), COX6C, COX7A1 (or COX7A2), COX7B, COX7C, COX8B and NDUFA4, which are encoded in the nuclear genome. The complex exists as a monomer or a dimer and forms supercomplexes (SCs) in the inner mitochondrial membrane with NADH-ubiquinone oxidoreductase (complex I, CI) and ubiquinol-cytochrome c oxidoreductase (cytochrome b-c1 complex, complex III, CIII), resulting in different assemblies (supercomplex SCI(1)III(2)IV(1) and megacomplex MCI(2)III(2)IV(2)).

Its subcellular location is the mitochondrion inner membrane. It participates in energy metabolism; oxidative phosphorylation. In terms of biological role, component of the cytochrome c oxidase, the last enzyme in the mitochondrial electron transport chain which drives oxidative phosphorylation. The respiratory chain contains 3 multisubunit complexes succinate dehydrogenase (complex II, CII), ubiquinol-cytochrome c oxidoreductase (cytochrome b-c1 complex, complex III, CIII) and cytochrome c oxidase (complex IV, CIV), that cooperate to transfer electrons derived from NADH and succinate to molecular oxygen, creating an electrochemical gradient over the inner membrane that drives transmembrane transport and the ATP synthase. Cytochrome c oxidase is the component of the respiratory chain that catalyzes the reduction of oxygen to water. Electrons originating from reduced cytochrome c in the intermembrane space (IMS) are transferred via the dinuclear copper A center (CU(A)) of subunit 2 and heme A of subunit 1 to the active site in subunit 1, a binuclear center (BNC) formed by heme A3 and copper B (CU(B)). The BNC reduces molecular oxygen to 2 water molecules using 4 electrons from cytochrome c in the IMS and 4 protons from the mitochondrial matrix. The polypeptide is Cytochrome c oxidase subunit 8B, mitochondrial (COX8B) (Bos taurus (Bovine)).